The primary structure comprises 576 residues: Sulfite reductase [NADPH] hemoprotein beta-component (576 aa).

[4Fe-4S] cluster contacts are provided by C435, C441, C480, and C484. Position 484 (C484) interacts with siroheme.

Belongs to the nitrite and sulfite reductase 4Fe-4S domain family. Alpha(8)-beta(8). The alpha component is a flavoprotein, the beta component is a hemoprotein. The cofactor is siroheme. It depends on [4Fe-4S] cluster as a cofactor.

The catalysed reaction is hydrogen sulfide + 3 NADP(+) + 3 H2O = sulfite + 3 NADPH + 4 H(+). It functions in the pathway sulfur metabolism; hydrogen sulfide biosynthesis; hydrogen sulfide from sulfite (NADPH route): step 1/1. Its function is as follows. Component of the sulfite reductase complex that catalyzes the 6-electron reduction of sulfite to sulfide. This is one of several activities required for the biosynthesis of L-cysteine from sulfate. This Yersinia pseudotuberculosis serotype IB (strain PB1/+) protein is Sulfite reductase [NADPH] hemoprotein beta-component.